We begin with the raw amino-acid sequence, 253 residues long: Sulfur carrier protein FdhD (253 aa).

The active-site Cysteine persulfide intermediate is the C100.

It belongs to the FdhD family.

It localises to the cytoplasm. Functionally, required for formate dehydrogenase (FDH) activity. Acts as a sulfur carrier protein that transfers sulfur from IscS to the molybdenum cofactor prior to its insertion into FDH. The protein is Sulfur carrier protein FdhD of Sulfolobus acidocaldarius (strain ATCC 33909 / DSM 639 / JCM 8929 / NBRC 15157 / NCIMB 11770).